A 110-amino-acid chain; its full sequence is Acylphosphatase (110 aa).

One can recognise an Acylphosphatase-like domain in the interval 24–110 (RVRVYVSGRV…SGGARGFEVR (87 aa)). Active-site residues include Arg-39 and Asn-57.

It belongs to the acylphosphatase family.

It catalyses the reaction an acyl phosphate + H2O = a carboxylate + phosphate + H(+). The protein is Acylphosphatase (acyP) of Rubrobacter xylanophilus (strain DSM 9941 / JCM 11954 / NBRC 16129 / PRD-1).